Here is a 67-residue protein sequence, read N- to C-terminus: Large ribosomal subunit protein bL35 (67 aa).

Residues 21 to 50 (KVMCGPGNKRHGLINRPQKMKRTNRGPQTM) are disordered. Basic residues predominate over residues 28–44 (NKRHGLINRPQKMKRTN).

The protein belongs to the bacterial ribosomal protein bL35 family.

In Gluconobacter oxydans (strain 621H) (Gluconobacter suboxydans), this protein is Large ribosomal subunit protein bL35.